The sequence spans 429 residues: Citrate synthase (429 aa).

Active-site residues include His306 and Asp364.

It belongs to the citrate synthase family.

The catalysed reaction is oxaloacetate + acetyl-CoA + H2O = citrate + CoA + H(+). It participates in carbohydrate metabolism; tricarboxylic acid cycle; isocitrate from oxaloacetate: step 1/2. This is Citrate synthase (gltA) from Rhizobium meliloti (strain 1021) (Ensifer meliloti).